The chain runs to 540 residues: Synaptotagmin-3 (540 aa).

Residues 9 to 29 (GIIGFVIGIPIGLILGFFVLI) traverse the membrane as a helical segment. The SMP-LTD domain occupies 67–249 (DYERVDWFNK…WPQVLEIPIL (183 aa)). The segment at 227–509 (QETIKRQVSS…ELGHVDINLD (283 aa)) is phospholipid binding. 2 consecutive C2 domains span residues 240–363 (WPQV…EFNL) and 401–521 (RKES…NQKY). Ca(2+) is bound by residues Asp277, Asp283, Asp333, Asp335, and Asp341.

Belongs to the synaptotagmin family. Requires Ca(2+) as cofactor.

It localises to the membrane. Functionally, may be involved in membrane trafficking. The sequence is that of Synaptotagmin-3 (SYT3) from Arabidopsis thaliana (Mouse-ear cress).